A 1954-amino-acid chain; its full sequence is Protein abnormal spindle (1954 aa).

Residues 134–155 are disordered; sequence VKNPRKFPTVGKTLQLKSPTGA. Residues Ser151 and Ser360 each carry the phosphoserine modification. Residue Thr364 is modified to Phosphothreonine. 10 positions are modified to phosphoserine: Ser388, Ser390, Ser395, Ser398, Ser491, Ser495, Ser497, Ser501, Ser504, and Ser514. Positions 476 to 548 are disordered; it reads KSVKGSPVKN…SSSAHAWPHA (73 aa). A compositionally biased stretch (polar residues) spans 498–507; sequence DAPSNESLYR. Positions 528 to 548 are enriched in low complexity; the sequence is RSAAPANASARSSSAHAWPHA. In terms of domain architecture, Calponin-homology (CH) spans 836 to 968; that stretch reads KETKDILLRF…LLWQLIYKFR (133 aa). IQ domains follow at residues 1004–1033, 1386–1415, and 1467–1496; these read RHRAATVIQAVFRGHQMRKYVKLFKTERTQ, TQAAVSCLQMHWRNHLLRKRERNSFLQLRQ, and QREAIIKVQRRYRGNLEMRKQIEVYQKQRQ. The stretch at 1614-1641 forms a coiled coil; sequence RANRSMKQARQEFVQLRTIAVHLQQKFR. IQ domains lie at 1656-1687 and 1690-1721; these read LRCSMPGFQARARGFMARKRFQALMTPEMMDL and QKRAAKVIQRYWRGYLIRRRQKHQGLLDIRKR.

Its subcellular location is the cytoplasm. It is found in the nucleus. It localises to the cytoskeleton. The protein localises to the spindle. The protein resides in the microtubule organizing center. Its subcellular location is the perinuclear region. Required to maintain the structure of the centrosomal microtubule organizing center (MTOC) during mitosis. May have a preferential role in regulating neurogenesis. Required for germ cell mitosis and oocyte differentiation. The sequence is that of Protein abnormal spindle from Drosophila melanogaster (Fruit fly).